The primary structure comprises 428 residues: Glutamate-1-semialdehyde 2,1-aminomutase (428 aa).

Position 265 is an N6-(pyridoxal phosphate)lysine (Lys-265).

This sequence belongs to the class-III pyridoxal-phosphate-dependent aminotransferase family. HemL subfamily. Homodimer. The cofactor is pyridoxal 5'-phosphate.

The protein localises to the cytoplasm. It catalyses the reaction (S)-4-amino-5-oxopentanoate = 5-aminolevulinate. Its pathway is porphyrin-containing compound metabolism; protoporphyrin-IX biosynthesis; 5-aminolevulinate from L-glutamyl-tRNA(Glu): step 2/2. The sequence is that of Glutamate-1-semialdehyde 2,1-aminomutase from Shewanella sediminis (strain HAW-EB3).